The following is a 369-amino-acid chain: Phosphate-binding protein PstS 3 (369 aa).

An N-terminal signal peptide occupies residues 1–21; sequence MKLNQFGAAIGLLATGALLSG. Cysteine 22 carries the N-palmitoyl cysteine lipid modification. Cysteine 22 carries S-diacylglycerol cysteine lipidation. Residues 55-57, serine 85, aspartate 103, and 190-192 each bind phosphate; these read STA and SGT.

Belongs to the PstS family. In terms of assembly, the complex is composed of two ATP-binding proteins (PstB), two transmembrane proteins (PstC and PstA) and a solute-binding protein (PstS).

The protein localises to the cell membrane. Functionally, part of the ABC transporter complex PstSACB involved in phosphate import. In Mycobacterium leprae (strain TN), this protein is Phosphate-binding protein PstS 3 (pstS2).